The chain runs to 467 residues: uncharacterized protein (467 aa).

A disordered region spans residues 416–467; sequence KQQRAQTAVVGTTKELVSKATHMKPPRTPPGEAEHRKRSQSLAICQWNKNSR. Residues 455-467 show a composition bias toward polar residues; that stretch reads QSLAICQWNKNSR.

This is an uncharacterized protein from Homo sapiens (Human).